The following is a 618-amino-acid chain: UvrABC system protein C (618 aa).

Positions 13–92 constitute a GIY-YIG domain; it reads DKPGVYLMKN…IKKYRPKYNI (80 aa). In terms of domain architecture, UVR spans 204-239; that stretch reads LDIVENFKLNMEKAAENLEFEKAAMLRDKINIIEKI.

This sequence belongs to the UvrC family. In terms of assembly, interacts with UvrB in an incision complex.

It is found in the cytoplasm. The UvrABC repair system catalyzes the recognition and processing of DNA lesions. UvrC both incises the 5' and 3' sides of the lesion. The N-terminal half is responsible for the 3' incision and the C-terminal half is responsible for the 5' incision. The chain is UvrABC system protein C from Clostridium botulinum (strain Kyoto / Type A2).